The primary structure comprises 431 residues: NADH-quinone oxidoreductase subunit D 2 (431 aa).

A disordered region spans residues 1–27; it reads MNDHKGLGGLDTEATPGSFGAGEPPRA.

The protein belongs to the complex I 49 kDa subunit family. In terms of assembly, NDH-1 is composed of 14 different subunits. Subunits NuoB, C, D, E, F, and G constitute the peripheral sector of the complex.

Its subcellular location is the cell inner membrane. The catalysed reaction is a quinone + NADH + 5 H(+)(in) = a quinol + NAD(+) + 4 H(+)(out). In terms of biological role, NDH-1 shuttles electrons from NADH, via FMN and iron-sulfur (Fe-S) centers, to quinones in the respiratory chain. The immediate electron acceptor for the enzyme in this species is believed to be ubiquinone. Couples the redox reaction to proton translocation (for every two electrons transferred, four hydrogen ions are translocated across the cytoplasmic membrane), and thus conserves the redox energy in a proton gradient. The chain is NADH-quinone oxidoreductase subunit D 2 from Anaeromyxobacter sp. (strain Fw109-5).